A 182-amino-acid chain; its full sequence is Probable inosine/xanthosine triphosphatase (182 aa).

E42 and D69 together coordinate Mg(2+).

Belongs to the YjjX NTPase family. Homodimer. It depends on Mg(2+) as a cofactor. Requires Mn(2+) as cofactor.

The enzyme catalyses XTP + H2O = XDP + phosphate + H(+). The catalysed reaction is ITP + H2O = IDP + phosphate + H(+). Functionally, phosphatase that hydrolyzes non-canonical purine nucleotides such as XTP and ITP to their respective diphosphate derivatives. Probably excludes non-canonical purines from DNA/RNA precursor pool, thus preventing their incorporation into DNA/RNA and avoiding chromosomal lesions. The protein is Probable inosine/xanthosine triphosphatase of Methanothermobacter thermautotrophicus (strain ATCC 29096 / DSM 1053 / JCM 10044 / NBRC 100330 / Delta H) (Methanobacterium thermoautotrophicum).